The sequence spans 204 residues: Small ribosomal subunit protein uS4 (204 aa).

Residues 92–156 (RRLDALVLRS…SKVPFQVARE (65 aa)) enclose the S4 RNA-binding domain.

It belongs to the universal ribosomal protein uS4 family. Part of the 30S ribosomal subunit. Contacts protein S5. The interaction surface between S4 and S5 is involved in control of translational fidelity.

Functionally, one of the primary rRNA binding proteins, it binds directly to 16S rRNA where it nucleates assembly of the body of the 30S subunit. With S5 and S12 plays an important role in translational accuracy. The polypeptide is Small ribosomal subunit protein uS4 (Streptomyces griseus subsp. griseus (strain JCM 4626 / CBS 651.72 / NBRC 13350 / KCC S-0626 / ISP 5235)).